The primary structure comprises 491 residues: Sucrose transport protein SUC9 (491 aa).

Basic and acidic residues predominate over residues Met-1 to Pro-12. Positions Met-1–Glu-26 are disordered. The Cytoplasmic portion of the chain corresponds to Met-1–Met-33. Residue Ser-17 is modified to Phosphoserine. The helical transmembrane segment at Ile-34–Leu-54 threads the bilayer. At Thr-55 to Ser-68 the chain is on the extracellular side. Residues Ser-69 to Phe-89 form a helical membrane-spanning segment. Topologically, residues Ser-90–Arg-101 are cytoplasmic. Residues Pro-102–Ala-122 traverse the membrane as a helical segment. The Extracellular segment spans residues Asp-123–Arg-139. The helical transmembrane segment at Ala-140 to Gly-160 threads the bilayer. Topologically, residues Pro-161 to Asn-181 are cytoplasmic. The helical transmembrane segment at Ala-182–Thr-202 threads the bilayer. Topologically, residues Asn-203 to Lys-224 are extracellular. Residues Ser-225 to Val-245 form a helical membrane-spanning segment. Residues Glu-246–Pro-277 lie on the Cytoplasmic side of the membrane. A helical membrane pass occupies residues Met-278–Tyr-298. Residues Asp-299 to Gly-329 lie on the Extracellular side of the membrane. A helical membrane pass occupies residues Ser-330–Ile-350. Residues Ser-351–Arg-358 lie on the Cytoplasmic side of the membrane. The chain crosses the membrane as a helical span at residues Leu-359–Lys-379. The Extracellular portion of the chain corresponds to Lys-380 to Phe-406. The chain crosses the membrane as a helical span at residues Ala-407–Ile-427. The Cytoplasmic portion of the chain corresponds to Ser-428–Asn-443. The chain crosses the membrane as a helical span at residues Met-444–Phe-464. The Extracellular portion of the chain corresponds to Gly-465–Asn-468. A helical membrane pass occupies residues Leu-469–Val-489. At Leu-490–Pro-491 the chain is on the cytoplasmic side.

Belongs to the glycoside-pentoside-hexuronide (GPH) cation symporter transporter (TC 2.A.2.4) family. In terms of tissue distribution, widely expressed.

The protein resides in the cell membrane. The enzyme catalyses sucrose(out) + H(+)(out) = sucrose(in) + H(+)(in). It functions in the pathway glycan biosynthesis; sucrose metabolism. Inhibited by protonophores (e.g. carbonyl cyanide m-chlorophenyl-hydrazone (CCCP)) and SH group inhibitors (e.g. p-chloromercuribenzene sulphonic acid (PCMBS)). Functionally, high-affinity sucrose transporter. Responsible for the transport of sucrose into the cell, with the concomitant uptake of protons (symport system). Can also transport a wide range of glucosides, such as helicin, salicin, arbutin, maltose, fraxin, esculin, uranose, alpha-methylglucoside, alpha-phenylglucoside and beta-phenylglucoside. Plays a role in flowering time transition delay. The chain is Sucrose transport protein SUC9 from Arabidopsis thaliana (Mouse-ear cress).